Here is a 205-residue protein sequence, read N- to C-terminus: Holliday junction branch migration complex subunit RuvA (205 aa).

The domain I stretch occupies residues 1–62; sequence MFEYVTGYVE…EDIMALYGFK (62 aa). The domain II stretch occupies residues 63-141; sequence TREERLLFTK…DVVPDAFVDL (79 aa). Residues 142-152 are flexible linker; it reads FSDTERFDEKK. The domain III stretch occupies residues 153–205; sequence GSSAELDEALEALRALGYAEREVSRVVPELLKESLTTDQYIKKALSLLLNGKR.

The protein belongs to the RuvA family. Homotetramer. Forms an RuvA(8)-RuvB(12)-Holliday junction (HJ) complex. HJ DNA is sandwiched between 2 RuvA tetramers; dsDNA enters through RuvA and exits via RuvB. An RuvB hexamer assembles on each DNA strand where it exits the tetramer. Each RuvB hexamer is contacted by two RuvA subunits (via domain III) on 2 adjacent RuvB subunits; this complex drives branch migration. In the full resolvosome a probable DNA-RuvA(4)-RuvB(12)-RuvC(2) complex forms which resolves the HJ.

It is found in the cytoplasm. Functionally, the RuvA-RuvB-RuvC complex processes Holliday junction (HJ) DNA during genetic recombination and DNA repair, while the RuvA-RuvB complex plays an important role in the rescue of blocked DNA replication forks via replication fork reversal (RFR). RuvA specifically binds to HJ cruciform DNA, conferring on it an open structure. The RuvB hexamer acts as an ATP-dependent pump, pulling dsDNA into and through the RuvAB complex. HJ branch migration allows RuvC to scan DNA until it finds its consensus sequence, where it cleaves and resolves the cruciform DNA. The polypeptide is Holliday junction branch migration complex subunit RuvA (Bacillus cereus (strain ATCC 14579 / DSM 31 / CCUG 7414 / JCM 2152 / NBRC 15305 / NCIMB 9373 / NCTC 2599 / NRRL B-3711)).